A 212-amino-acid polypeptide reads, in one-letter code: MDRETLAARIDHTVLGPTTTRADVLSVVDDAEAHGMNVCIPPCYVADARDHASADRTIATVIGFPHGTQATSVKVAAAEHAHADGADELDLVIPIGRLKGGDHEAVTAEIAAVNDATPLPVKVIIETPVLTDAEKHAACEAAADADAAMVKTATGFTDGGATVPDVSLMSEYLPVKASGGVGTYADAAAMFDAGAVRIGASSGVDIVASFAE.

Catalysis depends on Asp-90, which acts as the Proton donor/acceptor. Lys-151 (schiff-base intermediate with acetaldehyde) is an active-site residue. Residue Lys-176 is the Proton donor/acceptor of the active site.

The protein belongs to the DeoC/FbaB aldolase family. DeoC type 1 subfamily.

The protein localises to the cytoplasm. It catalyses the reaction 2-deoxy-D-ribose 5-phosphate = D-glyceraldehyde 3-phosphate + acetaldehyde. It functions in the pathway carbohydrate degradation; 2-deoxy-D-ribose 1-phosphate degradation; D-glyceraldehyde 3-phosphate and acetaldehyde from 2-deoxy-alpha-D-ribose 1-phosphate: step 2/2. Functionally, catalyzes a reversible aldol reaction between acetaldehyde and D-glyceraldehyde 3-phosphate to generate 2-deoxy-D-ribose 5-phosphate. The polypeptide is Deoxyribose-phosphate aldolase (Halobacterium salinarum (strain ATCC 29341 / DSM 671 / R1)).